The primary structure comprises 478 residues: Methionine aminopeptidase 2 (478 aa).

The tract at residues 1–122 (MAGVEQAASF…TDPPSVPICD (122 aa)) is disordered. A2 carries the N-acetylalanine modification. Residues 36 to 46 (KKKRRKKKKGK) are compositionally biased toward basic residues. S60 bears the Phosphoserine; alternate mark. An O-linked (GlcNAc) serine; alternate glycan is attached at S60. Positions 80 to 92 (ERDDDDEDGDGDA) are enriched in acidic residues. The span at 97–109 (GKKKKKKKKKRGP) shows a compositional bias: basic residues. Residue H231 coordinates substrate. 3 residues coordinate a divalent metal cation: D251, D262, and H331. Residue H339 coordinates substrate. A divalent metal cation contacts are provided by E364 and E459.

The protein belongs to the peptidase M24A family. Methionine aminopeptidase eukaryotic type 2 subfamily. In terms of assembly, binds EIF2S1 at low magnesium concentrations. Interacts strongly with the eIF-2 gamma-subunit EIF2S3. Co(2+) serves as cofactor. Zn(2+) is required as a cofactor. Requires Mn(2+) as cofactor. It depends on Fe(2+) as a cofactor. In terms of processing, contains approximately 12 O-linked N-acetylglucosamine (GlcNAc) residues. O-glycosylation is required for EIF2S1 binding.

It localises to the cytoplasm. It catalyses the reaction Release of N-terminal amino acids, preferentially methionine, from peptides and arylamides.. In terms of biological role, cotranslationally removes the N-terminal methionine from nascent proteins. The N-terminal methionine is often cleaved when the second residue in the primary sequence is small and uncharged (Met-Ala-, Cys, Gly, Pro, Ser, Thr, or Val). Functionally, protects eukaryotic initiation factor EIF2S1 from translation-inhibiting phosphorylation by inhibitory kinases such as EIF2AK2/PKR and EIF2AK1/HCR. Plays a critical role in the regulation of protein synthesis. The chain is Methionine aminopeptidase 2 (Metap2) from Mus musculus (Mouse).